The sequence spans 1016 residues: TBC1 domain family member 5 homolog B (1016 aa).

5 disordered regions span residues 1 to 23 (MDTS…IRNS), 60 to 109 (SPLI…TTTT), 179 to 209 (NNNN…DMNN), 463 to 566 (PTQQ…EEEE), and 704 to 872 (PPTT…SSHV). A compositionally biased stretch (polar residues) spans 12–23 (NSGTTTPNIRNS). Over residues 79–88 (QQQQQQQQQQ) the composition is skewed to low complexity. In terms of domain architecture, Rab-GAP TBC spans 280-636 (LKYSPLRGIA…NIWDALFAYG (357 aa)). Low complexity predominate over residues 467 to 525 (TNNSNNSNNTNNNNTTTSPSSSSSSSSSSTTTAAATTVSSSTSTSSSSSTITSSSSSTV). The span at 526 to 544 (SPPPPSSSSSPSPPPPPPL) shows a compositional bias: pro residues. The segment covering 545 to 558 (GSNSPTVASSSSSS) has biased composition (low complexity). The span at 704–717 (PPTTLSSSGSRQIP) shows a compositional bias: polar residues. Low complexity-rich tracts occupy residues 718-755 (NNNN…NNNI) and 766-789 (PFPE…QLSS). Positions 790-806 (ANTTPIDPLSNKTTPLI) are enriched in polar residues. A compositionally biased stretch (low complexity) spans 807–872 (SSTSNVSNTP…SSSLNNSSHV (66 aa)).

May act as a GTPase-activating protein for Rab family protein(s). The chain is TBC1 domain family member 5 homolog B (tbc1d5B) from Dictyostelium discoideum (Social amoeba).